Reading from the N-terminus, the 691-residue chain is Elongation factor G (691 aa).

Positions 8-282 (ERVRNIGIAA…AVIDYLPAPV (275 aa)) constitute a tr-type G domain. Residues 17–24 (AHIDAGKT), 81–85 (DTPGH), and 135–138 (NKMD) contribute to the GTP site.

Belongs to the TRAFAC class translation factor GTPase superfamily. Classic translation factor GTPase family. EF-G/EF-2 subfamily.

The protein resides in the cytoplasm. Its function is as follows. Catalyzes the GTP-dependent ribosomal translocation step during translation elongation. During this step, the ribosome changes from the pre-translocational (PRE) to the post-translocational (POST) state as the newly formed A-site-bound peptidyl-tRNA and P-site-bound deacylated tRNA move to the P and E sites, respectively. Catalyzes the coordinated movement of the two tRNA molecules, the mRNA and conformational changes in the ribosome. In Synechococcus sp. (strain CC9605), this protein is Elongation factor G.